The chain runs to 205 residues: uncharacterized protein (205 aa).

Residues Met-1–Thr-19 form the signal peptide. Low complexity predominate over residues Val-40–Thr-133. The interval Val-40 to Glu-135 is disordered. Residues Gly-147–Ile-167 form a helical membrane-spanning segment.

Its subcellular location is the host membrane. This is an uncharacterized protein from Equine herpesvirus 2 (strain 86/87) (EHV-2).